We begin with the raw amino-acid sequence, 245 residues long: MMKKRVKRVLFKISGEALSDGDSSNRISEERLSRLIAELKVVRNADVEVALVIGGGNILRGLSQSQSLQINRVSADQMGMLATLINGMALADALNTEDVPNLLTSTLSCPQLAELYNPQKASDALSQGKVVICTMGAGAPYLTTDTGAALRACELKVDILLKATMHVDGVYDQDPRECADAVRYDHISYRDFLSQGLGAIDPAAISLCMEAGIPIKMFSFARHSLEEAVFNTVGTVISSAEGGQL.

Position 12 to 15 (12 to 15 (KISG)) interacts with ATP. G55 contributes to the UMP binding site. The ATP site is built by G56 and R60. UMP is bound by residues D76 and 137–144 (AGAPYLTT). Residues T164, Y171, and D174 each contribute to the ATP site.

Belongs to the UMP kinase family. In terms of assembly, homohexamer.

The protein localises to the cytoplasm. The catalysed reaction is UMP + ATP = UDP + ADP. Its pathway is pyrimidine metabolism; CTP biosynthesis via de novo pathway; UDP from UMP (UMPK route): step 1/1. With respect to regulation, inhibited by UTP. Catalyzes the reversible phosphorylation of UMP to UDP. The sequence is that of Uridylate kinase from Chlamydia trachomatis serovar A (strain ATCC VR-571B / DSM 19440 / HAR-13).